Consider the following 332-residue polypeptide: Glyceraldehyde-3-phosphate dehydrogenase 3 (332 aa).

Residues R11, I12, and D33 each coordinate NAD(+). Residues K46 and K63 each participate in a glycyl lysine isopeptide (Lys-Gly) (interchain with G-Cter in ubiquitin) cross-link. Residue T120 participates in NAD(+) binding. Position 149-151 (149-151 (SCT)) interacts with D-glyceraldehyde 3-phosphate. C150 serves as the catalytic Nucleophile. Cysteine persulfide occurs at positions 150 and 154. Residue K160 forms a Glycyl lysine isopeptide (Lys-Gly) (interchain with G-Cter in URM1) linkage. D-glyceraldehyde 3-phosphate-binding positions include T180, 209 to 210 (TG), and R232. A Phosphoserine modification is found at S302. Residue K307 forms a Glycyl lysine isopeptide (Lys-Gly) (interchain with G-Cter in URM1) linkage. Residues N314 and Y318 each coordinate NAD(+).

Belongs to the glyceraldehyde-3-phosphate dehydrogenase family. As to quaternary structure, homotetramer. In terms of processing, conjugated to URM1, a ubiquitin-like protein, in response to oxidative stresses. The attachment of URM1 to lysine residues exclusively depends on the presence of a peroxidatic cysteine in the target protein, with low specificity for the particular residue, motif, or structural context at which urmylation can occur. The URM1-conjugation reaction is mechanistically and directly coupled to the process of cysteine persulfidation, transfering the sulfur atom of the URM1 thiocarboxyl group to redox-active cysteine residues in the target protein if it is exposed to oxidative conditions. Post-translationally, persulfidated on specific redox-active cysteine residues. Persulfidation (also called protein S-sulfhydration) may provide a molecular mechanism that enables cells to protect vulnerable cysteine residues from reactive oxygen species (ROS) under stress conditions.

It is found in the cytoplasm. Its subcellular location is the mitochondrion. It carries out the reaction D-glyceraldehyde 3-phosphate + phosphate + NAD(+) = (2R)-3-phospho-glyceroyl phosphate + NADH + H(+). The catalysed reaction is NADH + H2O = (6R)-NADHX. It catalyses the reaction NADH + H2O = (6S)-NADHX. The enzyme catalyses NADPH + H2O = (6R)-NADPHX. It carries out the reaction NADPH + H2O = (6S)-NADPHX. It participates in carbohydrate degradation; glycolysis; pyruvate from D-glyceraldehyde 3-phosphate: step 1/5. In terms of biological role, glyceraldehyde-3-phosphate dehydrogenase (GAPDH) involved in glycolysis and gluconeogenesis. Catalyzes the reaction of glyceraldehyde-3-phosphate to 1,3 bis-phosphoglycerate. The contribution of the TDH1, TDH2, and TDH3 to the total glyceraldehyde-3-phosphate dehydrogenase activity is 10-15, 25-30, and 50-60%, respectively. As a side activity, catalyzes the hydration of the nicotinamide ring of NADH or NADPH at the C6 position to give the corresponding hydrates, NADHX and NADPHX, which exist as R and S epimers, that cannot act as electron donors or acceptors and inhibit several dehydrogenases, making them toxic. The polypeptide is Glyceraldehyde-3-phosphate dehydrogenase 3 (Saccharomyces cerevisiae (strain ATCC 204508 / S288c) (Baker's yeast)).